The chain runs to 261 residues: Ribosomal RNA small subunit methyltransferase A (261 aa).

S-adenosyl-L-methionine is bound by residues His-12, Leu-14, Gly-39, Glu-60, Asp-81, and Asn-104.

It belongs to the class I-like SAM-binding methyltransferase superfamily. rRNA adenine N(6)-methyltransferase family. RsmA subfamily.

The protein resides in the cytoplasm. It carries out the reaction adenosine(1518)/adenosine(1519) in 16S rRNA + 4 S-adenosyl-L-methionine = N(6)-dimethyladenosine(1518)/N(6)-dimethyladenosine(1519) in 16S rRNA + 4 S-adenosyl-L-homocysteine + 4 H(+). Its function is as follows. Specifically dimethylates two adjacent adenosines (A1518 and A1519) in the loop of a conserved hairpin near the 3'-end of 16S rRNA in the 30S particle. May play a critical role in biogenesis of 30S subunits. The chain is Ribosomal RNA small subunit methyltransferase A from Albidiferax ferrireducens (strain ATCC BAA-621 / DSM 15236 / T118) (Rhodoferax ferrireducens).